The following is a 588-amino-acid chain: Probable cytochrome c oxidase subunit 1-beta (588 aa).

The segment at 1–26 is disordered; it reads MTATPAQRRPALPATRPYPARHGPKG. A helical transmembrane segment spans residues 43–63; sequence VLYLVSATGFFLIGGLLALLM. Histidine 87 serves as a coordination point for Fe(II)-heme a. The next 6 membrane-spanning stretches (helical) occupy residues 90-110, 128-148, 171-191, 214-234, 259-279, and 291-311; these read IMLL…VLPL, WLYL…GGAA, LWIL…VNMI, ILIT…ALMA, LFWF…FGII, and IFGY…SMAV. Cu cation-binding residues include histidine 265 and tyrosine 269. Positions 265-269 form a cross-link, 1'-histidyl-3'-tyrosine (His-Tyr); sequence HPEVY. The Cu cation site is built by histidine 314 and histidine 315. The next 2 helical transmembrane spans lie at 320–340 and 360–380; these read GAVL…PTGV and MLFA…GVIL. Residue histidine 398 coordinates heme a3. Helical transmembrane passes span 399-419, 434-454, and 477-497; these read FHYV…YFWF, LHFW…HWLG, and VSTI…WNGF. Histidine 400 serves as a coordination point for Fe(II)-heme a. The segment at 557–588 is disordered; sequence AEAHAGRRAGHGAGAELSVPSTVATKDDDHTS.

Belongs to the heme-copper respiratory oxidase family. Associates with subunits II, III and IV to form cytochrome c oxidase. The cofactor is Cu(2+). Heme serves as cofactor.

Its subcellular location is the cell membrane. The catalysed reaction is 4 Fe(II)-[cytochrome c] + O2 + 8 H(+)(in) = 4 Fe(III)-[cytochrome c] + 2 H2O + 4 H(+)(out). It participates in energy metabolism; oxidative phosphorylation. Cytochrome c oxidase is the component of the respiratory chain that catalyzes the reduction of oxygen to water. Subunits 1-3 form the functional core of the enzyme complex. CO I is the catalytic subunit of the enzyme. Electrons originating in cytochrome c are transferred via the copper A center of subunit 2 and heme A of subunit 1 to the bimetallic center formed by heme A3 and copper B. This Nocardia farcinica (strain IFM 10152) protein is Probable cytochrome c oxidase subunit 1-beta (ctaD2).